A 202-amino-acid chain; its full sequence is Peptide deformylase (202 aa).

Fe cation contacts are provided by C121 and H163. The active site involves E164. A Fe cation-binding site is contributed by H167.

Belongs to the polypeptide deformylase family. Fe(2+) serves as cofactor.

It carries out the reaction N-terminal N-formyl-L-methionyl-[peptide] + H2O = N-terminal L-methionyl-[peptide] + formate. In terms of biological role, removes the formyl group from the N-terminal Met of newly synthesized proteins. Requires at least a dipeptide for an efficient rate of reaction. N-terminal L-methionine is a prerequisite for activity but the enzyme has broad specificity at other positions. The polypeptide is Peptide deformylase (Synechococcus sp. (strain CC9311)).